Reading from the N-terminus, the 146-residue chain is Catabolic 3-dehydroquinase (146 aa).

Tyr24 serves as the catalytic Proton acceptor. Residues Asn78, His84, and Asp91 each coordinate substrate. Catalysis depends on His104, which acts as the Proton donor. Substrate-binding positions include 105-106 (IT) and Arg115.

It belongs to the type-II 3-dehydroquinase family. In terms of assembly, homododecamer. Adopts a ring-like structure, composed of an arrangement of two hexameric rings stacked on top of one another.

It catalyses the reaction 3-dehydroquinate = 3-dehydroshikimate + H2O. It functions in the pathway aromatic compound metabolism; 3,4-dihydroxybenzoate biosynthesis; 3,4-dihydroxybenzoate from 3-dehydroquinate: step 1/2. Its function is as follows. Is involved in the catabolism of quinate. Allows the utilization of quinate as carbon source via the beta-ketoadipate pathway. The sequence is that of Catabolic 3-dehydroquinase from Candida tropicalis (strain ATCC MYA-3404 / T1) (Yeast).